Here is a 762-residue protein sequence, read N- to C-terminus: cGMP-dependent protein kinase 2 (762 aa).

The disordered stretch occupies residues 1–25; sequence MGNGSVKPKHSKHPDGQSGNLSNEA. Glycine 2 carries N-myristoyl glycine lipidation. A phosphoserine mark is found at serine 110 and serine 117. The tract at residues 112–138 is disordered; the sequence is LVSLHSRRGAKAGVSAEPTSRTYDLNK. A cGMP-binding, high affinity; cAMP-binding, moderate affinity region spans residues 168-283; the sequence is FLKRLDPQQI…DEEYRNFLRS (116 aa). Residues 232–235, 242–243, lysine 347, 356–359, 366–367, aspartate 412, and arginine 415 each bind 3',5'-cyclic GMP; these read GELA, RT, GEKA, and RS. Residues 286–416 are cGMP-binding, high affinity; cAMP-binding, low affinity; it reads LLKNLPEDKL…TLNRDDEKRH (131 aa). Residue serine 431 is modified to Phosphoserine. The Protein kinase domain occupies 453 to 711; that stretch reads LEIIATLGVG…INDIKKHRWL (259 aa). Residues 459 to 467 and lysine 482 each bind ATP; that span reads LGVGGFGRV. Aspartate 576 acts as the Proton acceptor in catalysis. Residue threonine 609 is modified to Phosphothreonine. Positions 712 to 762 constitute an AGC-kinase C-terminal domain; sequence NGFNWEGLKARSLPSPLRRELSGPIDHSYFDKYPPEKGVPPDEMSGWDKDF. The tract at residues 740–762 is disordered; sequence YFDKYPPEKGVPPDEMSGWDKDF.

This sequence belongs to the protein kinase superfamily. AGC Ser/Thr protein kinase family. cGMP subfamily. Interacts with GRIA1/GLUR1. In terms of processing, myristoylation mediates membrane localization. As to expression, highly expressed in intestinal mucosa and is 20 times less abundant in brain and kidney. Expressed in jejunum, in the apical domain of the villus epithelium.

The protein localises to the apical cell membrane. It localises to the cell membrane. It carries out the reaction L-seryl-[protein] + ATP = O-phospho-L-seryl-[protein] + ADP + H(+). The enzyme catalyses L-threonyl-[protein] + ATP = O-phospho-L-threonyl-[protein] + ADP + H(+). Its activity is regulated as follows. Binding of cGMP results in enzyme activation. In terms of biological role, crucial regulator of intestinal secretion and bone growth. Phosphorylates and activates CFTR on the plasma membrane. Plays a key role in intestinal secretion by regulating cGMP-dependent translocation of CFTR in jejunum. Acts downstream of NMDAR to activate the plasma membrane accumulation of GRIA1/GLUR1 in synapse and increase synaptic plasticity. Phosphorylates GRIA1/GLUR1 at Ser-863. Acts as regulator of gene expression and activator of the extracellular signal-regulated kinases MAPK3/ERK1 and MAPK1/ERK2 in mechanically stimulated osteoblasts. Under fluid shear stress, mediates ERK activation and subsequent induction of FOS, FOSL1/FRA1, FOSL2/FRA2 and FOSB that play a key role in the osteoblast anabolic response to mechanical stimulation. In Rattus norvegicus (Rat), this protein is cGMP-dependent protein kinase 2 (Prkg2).